The following is a 550-amino-acid chain: Chaperonin GroEL (550 aa).

ATP contacts are provided by residues 29–32, lysine 50, 86–90, glycine 416, and aspartate 498; these read TAGP and DGTTT.

The protein belongs to the chaperonin (HSP60) family. In terms of assembly, forms a cylinder of 14 subunits composed of two heptameric rings stacked back-to-back. Interacts with the co-chaperonin GroES.

It localises to the cytoplasm. The enzyme catalyses ATP + H2O + a folded polypeptide = ADP + phosphate + an unfolded polypeptide.. Functionally, together with its co-chaperonin GroES, plays an essential role in assisting protein folding. The GroEL-GroES system forms a nano-cage that allows encapsulation of the non-native substrate proteins and provides a physical environment optimized to promote and accelerate protein folding. The chain is Chaperonin GroEL from Anaplasma phagocytophilum (strain HZ).